The following is a 129-amino-acid chain: uncharacterized protein (129 aa).

Lys-121 is covalently cross-linked (Isoglutamyl lysine isopeptide (Lys-Gln) (interchain with Q-Cter in protein Pup)).

This is an uncharacterized protein from Mycolicibacterium smegmatis (strain ATCC 700084 / mc(2)155) (Mycobacterium smegmatis).